The primary structure comprises 133 residues: Small ribosomal subunit protein uS19 (133 aa).

Belongs to the universal ribosomal protein uS19 family.

Protein S19 forms a complex with S13 that binds strongly to the 16S ribosomal RNA. The sequence is that of Small ribosomal subunit protein uS19 (rps19) from Archaeoglobus fulgidus (strain ATCC 49558 / DSM 4304 / JCM 9628 / NBRC 100126 / VC-16).